Consider the following 127-residue polypeptide: Small ribosomal subunit protein uS17m (127 aa).

This sequence belongs to the universal ribosomal protein uS17 family.

It localises to the mitochondrion. In Dictyostelium discoideum (Social amoeba), this protein is Small ribosomal subunit protein uS17m (mrps17).